The chain runs to 470 residues: Maltose fermentation regulatory protein YPR196W (470 aa).

Positions 8 to 34 form a DNA-binding region, zn(2)-C6 fungal-type; sequence CDCCRVRRVKCDRNRPCDRCRQRNLRC. The Nuclear localization signal motif lies at 41–49; the sequence is RKRGPKSIG.

This sequence belongs to the MAL13 family.

Its subcellular location is the nucleus. Its function is as follows. May regulate the transcription of maltase and maltose permease genes. The chain is Maltose fermentation regulatory protein YPR196W from Saccharomyces cerevisiae (strain ATCC 204508 / S288c) (Baker's yeast).